Here is a 293-residue protein sequence, read N- to C-terminus: Undecaprenyl-diphosphatase (293 aa).

7 helical membrane-spanning segments follow: residues 3–23 (IALAIKALILGIVEGLTEFLP), 43–63 (KGKIFEIVIQFGAILAVCWEF), 85–105 (INVIVATIPAITLALIFGKAI), 109–129 (LFNPIVVASAFILGGFVILWA), 203–223 (VATEFSFFLAIPVIFGATVYE), 238–258 (IFAVGFVAAFISAFFCVRWLL), and 269–289 (FAWYRIIFGIIVLATAYTHLI).

Belongs to the UppP family.

It is found in the cell inner membrane. It catalyses the reaction di-trans,octa-cis-undecaprenyl diphosphate + H2O = di-trans,octa-cis-undecaprenyl phosphate + phosphate + H(+). Functionally, catalyzes the dephosphorylation of undecaprenyl diphosphate (UPP). Confers resistance to bacitracin. In Ralstonia pickettii (strain 12J), this protein is Undecaprenyl-diphosphatase.